The sequence spans 297 residues: 4-hydroxy-tetrahydrodipicolinate synthase (297 aa).

Thr-55 lines the pyruvate pocket. The Proton donor/acceptor role is filled by Tyr-144. The active-site Schiff-base intermediate with substrate is the Lys-172. Residue Ile-213 participates in pyruvate binding.

Belongs to the DapA family. In terms of assembly, homotetramer; dimer of dimers.

The protein resides in the cytoplasm. It carries out the reaction L-aspartate 4-semialdehyde + pyruvate = (2S,4S)-4-hydroxy-2,3,4,5-tetrahydrodipicolinate + H2O + H(+). Its pathway is amino-acid biosynthesis; L-lysine biosynthesis via DAP pathway; (S)-tetrahydrodipicolinate from L-aspartate: step 3/4. In terms of biological role, catalyzes the condensation of (S)-aspartate-beta-semialdehyde [(S)-ASA] and pyruvate to 4-hydroxy-tetrahydrodipicolinate (HTPA). The polypeptide is 4-hydroxy-tetrahydrodipicolinate synthase (Lactococcus lactis subsp. cremoris (strain MG1363)).